The primary structure comprises 237 residues: Urease accessory protein UreF (237 aa).

This sequence belongs to the UreF family. As to quaternary structure, ureD, UreF and UreG form a complex that acts as a GTP-hydrolysis-dependent molecular chaperone, activating the urease apoprotein by helping to assemble the nickel containing metallocenter of UreC. The UreE protein probably delivers the nickel.

It is found in the cytoplasm. Required for maturation of urease via the functional incorporation of the urease nickel metallocenter. The sequence is that of Urease accessory protein UreF from Streptococcus salivarius (strain 57.I).